We begin with the raw amino-acid sequence, 830 residues long: C-Jun-amino-terminal kinase-interacting protein 2 (830 aa).

5 disordered regions span residues 1–26, 44–354, 367–438, 452–504, and 539–574; these read MADR…PPQD, CGLG…ADSP, EGSS…PGPC, LWAT…GSTA, and GNDS…PDSP. Residues 77–105 are compositionally biased toward acidic residues; that stretch reads DFQEFEMIDDNEEEDDEEEEEEEEEEEDG. The JNK-binding domain (JBD) stretch occupies residues 111–278; the sequence is AGGGPGSQAL…RMISSISETE (168 aa). Residues 142–172 are compositionally biased toward polar residues; sequence LHLTTLGAQDSLNNNNGGFTSAPPSSWQETV. Low complexity-rich tracts occupy residues 176–190 and 218–227; these read PAQE…PLLP and ASSGGASPSS. The segment covering 233-249 has biased composition (basic and acidic residues); sequence ADLRSHSSGGHEGRRSS. The segment at 242–504 is necessary for interaction with FGF13; it reads GHEGRRSSQE…PGSRTTGSTA (263 aa). Residues serine 257, serine 304, and serine 307 each carry the phosphoserine modification. Positions 271–307 are enriched in low complexity; that stretch reads ISSISETELELSSDGGSSSGRSSHLTNSIEEASSPAS. A compositionally biased stretch (acidic residues) spans 333-352; sequence TNSEYESGSESEPDLSEDAD. The segment covering 427–437 has biased composition (low complexity); the sequence is APRLGPAQPGP. Composition is skewed to acidic residues over residues 471 to 490 and 541 to 555; these read SEEE…DAED and DSEE…EEEA. The 62-residue stretch at 610–671 folds into the SH3 domain; that stretch reads EREQTHRAVF…PAFYAHAVPG (62 aa). One can recognise a PID domain in the interval 683-819; the sequence is PCWVDRFDVQ…FLEYYQEHLA (137 aa).

It belongs to the JIP scaffold family. Forms homo- or heterooligomeric complexes. Binds specific components of the JNK signaling pathway namely JNK1, JNK2, JNK3, MAP2K7, MAP3K10, MAP3K11, MAP3K12 and MAPK13. Also binds the proline-rich domain-containing splice variant of apolipoprotein E receptor 2 (ApoER2). Binds the TPR motif-containing C-terminal of kinesin light chain. Binds the cytoplasmic tails of LRP1 and LRP2 (Megalin). Interacts with DCLK2. Interacts with FGF13; enables the interaction with MAPK13 and may regulate the MAPK8IP2 scaffolding activity. Interacts with TIAM1 and TIAM2. Interacts with SH3RF2. In terms of tissue distribution, highly expressed in brain. Expressed in all neurons. Also expressed in testis, primarily in the epididymal epidermis.

The protein resides in the cytoplasm. Its function is as follows. The JNK-interacting protein (JIP) group of scaffold proteins selectively mediates JNK signaling by aggregating specific components of the MAPK cascade to form a functional JNK signaling module. JIP2 inhibits IL1 beta-induced apoptosis in insulin-secreting cells. In Mus musculus (Mouse), this protein is C-Jun-amino-terminal kinase-interacting protein 2 (Mapk8ip2).